We begin with the raw amino-acid sequence, 141 residues long: MELPKPQTVQQLSDKLTVPVEDLLLPCRFCNSFLTYIELREFDYKNLQLIWTQEDFVFACCSSCAYASAQYECQQFYELTVFGREIEQVEQQTIGLIVIRCQYCLKCLDLIEKLDICCSHQAFHKVRGNWKGRCRHCKAIE.

Zinc fingers lie at residues 27–64 (CRFCNSFLTYIELREFDYKNLQLIWTQEDFVFACCSSC) and 101–137 (CQYCLKCLDLIEKLDICCSHQAFHKVRGNWKGRCRHC).

It belongs to the papillomaviridae E6 protein family. Forms homodimers. Interacts with ubiquitin-protein ligase UBE3A/E6-AP; this interaction stimulates UBE3A ubiquitin activity. Interacts with host BAK1.

It is found in the host cytoplasm. The protein resides in the host nucleus. Its function is as follows. Plays a major role in the induction and maintenance of cellular transformation. E6 associates with host UBE3A/E6-AP ubiquitin-protein ligase and modulates its activity. Protects host keratinocytes from apoptosis by mediating the degradation of host BAK1. May also inhibit host immune response. This Homo sapiens (Human) protein is Protein E6.